The sequence spans 498 residues: Lipase 3 (498 aa).

A disulfide bridge connects residues cysteine 60 and cysteine 91. N-linked (GlcNAc...) asparagine glycosylation is present at asparagine 193. Serine 200 (acyl-ester intermediate) is an active-site residue. An N-linked (GlcNAc...) asparagine glycan is attached at asparagine 384. Histidine 409 (charge relay system) is an active-site residue. An N-linked (GlcNAc...) asparagine glycan is attached at asparagine 418.

This sequence belongs to the type-B carboxylesterase/lipase family.

The catalysed reaction is a triacylglycerol + H2O = a diacylglycerol + a fatty acid + H(+). This is Lipase 3 (LIP3) from Yarrowia lipolytica (strain CLIB 122 / E 150) (Yeast).